An 89-amino-acid chain; its full sequence is Small ribosomal subunit protein uS15 (89 aa).

Positions 1 to 25 (MSLSAEQKGEIVKKHARTASDTGSP) are disordered.

Belongs to the universal ribosomal protein uS15 family. As to quaternary structure, part of the 30S ribosomal subunit. Forms a bridge to the 50S subunit in the 70S ribosome, contacting the 23S rRNA.

Functionally, one of the primary rRNA binding proteins, it binds directly to 16S rRNA where it helps nucleate assembly of the platform of the 30S subunit by binding and bridging several RNA helices of the 16S rRNA. In terms of biological role, forms an intersubunit bridge (bridge B4) with the 23S rRNA of the 50S subunit in the ribosome. This chain is Small ribosomal subunit protein uS15, found in Alkalilimnicola ehrlichii (strain ATCC BAA-1101 / DSM 17681 / MLHE-1).